The sequence spans 660 residues: Putative ABC transporter ATP-binding MG390 homolog (660 aa).

Positions 6-126 (QEQPNECGIC…KQWTGYAATV (121 aa)) constitute a Peptidase C39 domain. Cysteine 12 is a catalytic residue. 6 helical membrane-spanning segments follow: residues 150–170 (LIIF…LLAT), 188–208 (IVVF…LYAL), 265–285 (HIPN…LIGI), 290–310 (FLWI…YDFF), 379–399 (SFAQ…GIIE), and 402–422 (YTLA…AYAT). One can recognise an ABC transporter domain in the interval 464-660 (INLNNCSITL…INLSPYLQQT (197 aa)). Residue 494–501 (GENGSGKS) participates in ATP binding.

Belongs to the ABC transporter superfamily.

It localises to the cell membrane. This is Putative ABC transporter ATP-binding MG390 homolog from Mycoplasma pneumoniae (strain ATCC 29342 / M129 / Subtype 1) (Mycoplasmoides pneumoniae).